The sequence spans 373 residues: Inhibitor of nuclear factor kappa-B kinase-interacting protein (373 aa).

The segment covering 1-11 (MSEVKSRKKPG) has biased composition (basic residues). The tract at residues 1–38 (MSEVKSRKKPGPKVAAPEPEKRSDGRKNPEARGGAGWA) is disordered. Residues 18-30 (EPEKRSDGRKNPE) are compositionally biased toward basic and acidic residues. Residues 43–59 (GLSLLSLATSLGLAWLV) form a helical membrane-spanning segment. Coiled coils occupy residues 64–257 (EKFA…DKLS) and 290–325 (TERK…LEGI). A glycan (N-linked (GlcNAc...) asparagine) is linked at N151.

N-glycosylated at Asn-151.

It localises to the endoplasmic reticulum membrane. Its function is as follows. Target of p53/TP53 with pro-apoptotic function. The chain is Inhibitor of nuclear factor kappa-B kinase-interacting protein (Ikbip) from Rattus norvegicus (Rat).